Reading from the N-terminus, the 72-residue chain is Translation initiation factor IF-1 (72 aa).

Residues 1 to 72 form the S1-like domain; the sequence is MAKEELLEFP…TKGRINYRFK (72 aa).

It belongs to the IF-1 family. Component of the 30S ribosomal translation pre-initiation complex which assembles on the 30S ribosome in the order IF-2 and IF-3, IF-1 and N-formylmethionyl-tRNA(fMet); mRNA recruitment can occur at any time during PIC assembly.

It is found in the cytoplasm. Functionally, one of the essential components for the initiation of protein synthesis. Stabilizes the binding of IF-2 and IF-3 on the 30S subunit to which N-formylmethionyl-tRNA(fMet) subsequently binds. Helps modulate mRNA selection, yielding the 30S pre-initiation complex (PIC). Upon addition of the 50S ribosomal subunit IF-1, IF-2 and IF-3 are released leaving the mature 70S translation initiation complex. This chain is Translation initiation factor IF-1, found in Dinoroseobacter shibae (strain DSM 16493 / NCIMB 14021 / DFL 12).